The following is a 176-amino-acid chain: 3-hydroxyacyl-[acyl-carrier-protein] dehydratase FabZ (176 aa).

The active site involves His54.

It belongs to the thioester dehydratase family. FabZ subfamily.

The protein resides in the cytoplasm. The enzyme catalyses a (3R)-hydroxyacyl-[ACP] = a (2E)-enoyl-[ACP] + H2O. Its function is as follows. Involved in unsaturated fatty acids biosynthesis. Catalyzes the dehydration of short chain beta-hydroxyacyl-ACPs and long chain saturated and unsaturated beta-hydroxyacyl-ACPs. This chain is 3-hydroxyacyl-[acyl-carrier-protein] dehydratase FabZ, found in Yersinia pseudotuberculosis serotype O:1b (strain IP 31758).